Consider the following 354-residue polypeptide: Protein RecA (354 aa).

Position 65–72 (65–72) interacts with ATP; it reads GPESSGKT.

It belongs to the RecA family.

Its subcellular location is the cytoplasm. Functionally, can catalyze the hydrolysis of ATP in the presence of single-stranded DNA, the ATP-dependent uptake of single-stranded DNA by duplex DNA, and the ATP-dependent hybridization of homologous single-stranded DNAs. It interacts with LexA causing its activation and leading to its autocatalytic cleavage. This chain is Protein RecA, found in Pseudomonas savastanoi pv. phaseolicola (strain 1448A / Race 6) (Pseudomonas syringae pv. phaseolicola (strain 1448A / Race 6)).